We begin with the raw amino-acid sequence, 629 residues long: tRNA uridine 5-carboxymethylaminomethyl modification enzyme MnmG (629 aa).

FAD-binding positions include 13-18, V125, and S180; that span reads GGGHAG. 273 to 287 provides a ligand contact to NAD(+); it reads GPRYCPSIEDKVMRF. Position 370 (Q370) interacts with FAD.

Belongs to the MnmG family. Homodimer. Heterotetramer of two MnmE and two MnmG subunits. Requires FAD as cofactor.

The protein localises to the cytoplasm. NAD-binding protein involved in the addition of a carboxymethylaminomethyl (cmnm) group at the wobble position (U34) of certain tRNAs, forming tRNA-cmnm(5)s(2)U34. The chain is tRNA uridine 5-carboxymethylaminomethyl modification enzyme MnmG from Cronobacter sakazakii (strain ATCC BAA-894) (Enterobacter sakazakii).